Here is a 256-residue protein sequence, read N- to C-terminus: Zinc import ATP-binding protein ZnuC 1 (256 aa).

The region spanning 5 to 220 is the ABC transporter domain; the sequence is LTLQDVCVVF…PKYIALFGQQ (216 aa). Position 37–44 (37–44) interacts with ATP; that stretch reads GPNGAGKS. Positions 232-256 are disordered; sequence HHHNHDLSGEPSDGSCCSKNKKAHQ.

This sequence belongs to the ABC transporter superfamily. Zinc importer (TC 3.A.1.15.5) family. As to quaternary structure, the complex is composed of two ATP-binding proteins (ZnuC), two transmembrane proteins (ZnuB) and a solute-binding protein (ZnuA).

The protein resides in the cell inner membrane. The enzyme catalyses Zn(2+)(out) + ATP(in) + H2O(in) = Zn(2+)(in) + ADP(in) + phosphate(in) + H(+)(in). Part of the ABC transporter complex ZnuABC involved in zinc import. Responsible for energy coupling to the transport system. The sequence is that of Zinc import ATP-binding protein ZnuC 1 from Aliivibrio fischeri (strain ATCC 700601 / ES114) (Vibrio fischeri).